The sequence spans 365 residues: tRNA/tmRNA (uracil-C(5))-methyltransferase (365 aa).

Residues glutamine 189, tyrosine 217, asparagine 222, glutamate 238, and aspartate 298 each coordinate S-adenosyl-L-methionine. Residue cysteine 323 is the Nucleophile of the active site. Glutamate 357 functions as the Proton acceptor in the catalytic mechanism.

The protein belongs to the class I-like SAM-binding methyltransferase superfamily. RNA M5U methyltransferase family. TrmA subfamily.

The catalysed reaction is uridine(54) in tRNA + S-adenosyl-L-methionine = 5-methyluridine(54) in tRNA + S-adenosyl-L-homocysteine + H(+). The enzyme catalyses uridine(341) in tmRNA + S-adenosyl-L-methionine = 5-methyluridine(341) in tmRNA + S-adenosyl-L-homocysteine + H(+). Dual-specificity methyltransferase that catalyzes the formation of 5-methyluridine at position 54 (m5U54) in all tRNAs, and that of position 341 (m5U341) in tmRNA (transfer-mRNA). This Proteus mirabilis (strain HI4320) protein is tRNA/tmRNA (uracil-C(5))-methyltransferase.